Consider the following 423-residue polypeptide: Glutamyl-tRNA reductase 2 (423 aa).

Residues 48–51 (TCYR), S103, 108–110 (EPQ), and Q114 each bind substrate. C49 (nucleophile) is an active-site residue. 183-188 (GAGEMA) is a binding site for NADP(+).

Belongs to the glutamyl-tRNA reductase family. Homodimer.

The catalysed reaction is (S)-4-amino-5-oxopentanoate + tRNA(Glu) + NADP(+) = L-glutamyl-tRNA(Glu) + NADPH + H(+). Its pathway is porphyrin-containing compound metabolism; protoporphyrin-IX biosynthesis; 5-aminolevulinate from L-glutamyl-tRNA(Glu): step 1/2. Its function is as follows. Catalyzes the NADPH-dependent reduction of glutamyl-tRNA(Glu) to glutamate 1-semialdehyde (GSA). The sequence is that of Glutamyl-tRNA reductase 2 from Anaeromyxobacter sp. (strain Fw109-5).